We begin with the raw amino-acid sequence, 100 residues long: MNLTPREKDKLLISMAAMVARRRLERGVKLNYPEAIALISDFVVEGARDGRPVAELMEAGAHVITRDQVMEGIAEMIHDVQVEATFPDGTKLVTVHEPIR.

Belongs to the urease gamma subunit family. Heterotrimer of UreA (gamma), UreB (beta) and UreC (alpha) subunits. Three heterotrimers associate to form the active enzyme.

It localises to the cytoplasm. It catalyses the reaction urea + 2 H2O + H(+) = hydrogencarbonate + 2 NH4(+). The protein operates within nitrogen metabolism; urea degradation; CO(2) and NH(3) from urea (urease route): step 1/1. The chain is Urease subunit gamma from Rhizobium rhizogenes (strain K84 / ATCC BAA-868) (Agrobacterium radiobacter).